Consider the following 291-residue polypeptide: Undecaprenyl-diphosphatase (291 aa).

Transmembrane regions (helical) follow at residues 1 to 21 (MFIIELIKGIILGVVEGLTEF), 48 to 68 (SAFTFKIVIQLGSVFAAAWVF), 102 to 122 (LHVLVGMVPAGILGLLFDDFI), 126 to 146 (LFSVPTVMIGLFVGAIYMIIA), 162 to 182 (ISYFQAFVIGISQAVAMWPGF), 203 to 223 (SDFTFIMAVPIMLAASGLSLL), 231 to 251 (IADIPFYILGFLAAFTVGLIA), and 267 to 287 (FAIYRIVLVIFIAILYFGFGI).

It belongs to the UppP family.

It localises to the cell membrane. The catalysed reaction is di-trans,octa-cis-undecaprenyl diphosphate + H2O = di-trans,octa-cis-undecaprenyl phosphate + phosphate + H(+). Functionally, catalyzes the dephosphorylation of undecaprenyl diphosphate (UPP). Confers resistance to bacitracin. This chain is Undecaprenyl-diphosphatase, found in Staphylococcus aureus (strain COL).